A 139-amino-acid chain; its full sequence is D-ribose pyranase (139 aa).

H20 serves as the catalytic Proton donor. Residues D28, H106, and 128–130 (YAN) contribute to the substrate site.

It belongs to the RbsD / FucU family. RbsD subfamily. In terms of assembly, homodecamer.

It is found in the cytoplasm. It catalyses the reaction beta-D-ribopyranose = beta-D-ribofuranose. Its pathway is carbohydrate metabolism; D-ribose degradation; D-ribose 5-phosphate from beta-D-ribopyranose: step 1/2. Catalyzes the interconversion of beta-pyran and beta-furan forms of D-ribose. This is D-ribose pyranase from Histophilus somni (strain 2336) (Haemophilus somnus).